We begin with the raw amino-acid sequence, 493 residues long: 3-octaprenyl-4-hydroxybenzoate carboxy-lyase (493 aa).

Mn(2+) is bound at residue Asn172. Prenylated FMN-binding positions include 175-177 (IYR), 189-191 (RWL), and 194-195 (RG). Glu238 contacts Mn(2+). Residue Asp287 is the Proton donor of the active site.

This sequence belongs to the UbiD family. In terms of assembly, homohexamer. It depends on prenylated FMN as a cofactor. Mn(2+) is required as a cofactor.

The protein localises to the cell membrane. The catalysed reaction is a 4-hydroxy-3-(all-trans-polyprenyl)benzoate + H(+) = a 2-(all-trans-polyprenyl)phenol + CO2. It functions in the pathway cofactor biosynthesis; ubiquinone biosynthesis. Its function is as follows. Catalyzes the decarboxylation of 3-octaprenyl-4-hydroxy benzoate to 2-octaprenylphenol, an intermediate step in ubiquinone biosynthesis. The protein is 3-octaprenyl-4-hydroxybenzoate carboxy-lyase of Shewanella baltica (strain OS195).